We begin with the raw amino-acid sequence, 148 residues long: PTS system fructose-like EIIA component (148 aa).

Residues 2–145 form the PTS EIIA type-2 domain; it reads AALTASCIDL…DQVLALLNQT (144 aa). The active-site Tele-phosphohistidine intermediate is histidine 64. Histidine 64 carries the post-translational modification Phosphohistidine; by HPr.

Its subcellular location is the cytoplasm. In terms of biological role, the phosphoenolpyruvate-dependent sugar phosphotransferase system (sugar PTS), a major carbohydrate active transport system, catalyzes the phosphorylation of incoming sugar substrates concomitantly with their translocation across the cell membrane. The enzyme II FrvAB PTS system is involved in fructose transport. In Escherichia coli (strain K12), this protein is PTS system fructose-like EIIA component.